The primary structure comprises 456 residues: Histidine--tRNA ligase (456 aa).

Residues 1–20 (MTQSENVAAAGGAKTEPKVR) form a disordered region.

Belongs to the class-II aminoacyl-tRNA synthetase family. As to quaternary structure, homodimer.

The protein localises to the cytoplasm. The enzyme catalyses tRNA(His) + L-histidine + ATP = L-histidyl-tRNA(His) + AMP + diphosphate + H(+). This Cupriavidus necator (strain ATCC 17699 / DSM 428 / KCTC 22496 / NCIMB 10442 / H16 / Stanier 337) (Ralstonia eutropha) protein is Histidine--tRNA ligase.